Consider the following 387-residue polypeptide: Killer cell lectin-like receptor subfamily G member 2 (387 aa).

Residues 1 to 105 form a disordered region; that stretch reads MEPPQVPAEA…SGEPAPASWA (105 aa). Residues 15–27 show a composition bias toward basic and acidic residues; the sequence is ASEDSPRPERTGW. At Ser143 the chain carries Phosphoserine. The segment at 155–174 is disordered; that stretch reads QWLPRAPSPGSTWSRGSPLA. The helical transmembrane segment at 241 to 261 threads the bilayer; that stretch reads WALVVMAVLLAVCTVAVVALA. Residues 278-383 form the C-type lectin domain; the sequence is SQEQCYYLSE…CSSPRPWVCA (106 aa). Intrachain disulfides connect Cys299–Cys382 and Cys361–Cys374.

Its subcellular location is the membrane. This chain is Killer cell lectin-like receptor subfamily G member 2 (Klrg2), found in Mus musculus (Mouse).